Reading from the N-terminus, the 431-residue chain is MANSC domain-containing protein 1 (431 aa).

Residues 1 to 26 (MFFGGEGSLTYTLVIICFLTLRLSAS) form the signal peptide. Topologically, residues 27–385 (QNCLKKSLED…QYGLPFEKWL (359 aa)) are extracellular. The MANSC domain occupies 33–117 (SLEDVVIDIQ…LKPAKGLMSY (85 aa)). N-linked (GlcNAc...) asparagine glycans are attached at residues Asn-72, Asn-222, and Asn-251. The segment at 234–277 (SPHTTSATPKPATLLPTNASVTPSGTSQPQLATTAPPVTTVTSQ) is disordered. Positions 248 to 261 (LPTNASVTPSGTSQ) are enriched in polar residues. Residues 262–277 (PQLATTAPPVTTVTSQ) show a composition bias toward low complexity. Asn-327 and Asn-352 each carry an N-linked (GlcNAc...) asparagine glycan. Residues 352–372 (NKTASWEGREASPGSSSQGSV) form a disordered region. The chain crosses the membrane as a helical span at residues 386 to 408 (LIGSLLFGVLFLVIGLVLLGRIL). At 409–431 (SESLRRKRYSRLDYLINGIYVDI) the chain is on the cytoplasmic side.

Widely expressed.

The protein resides in the membrane. The sequence is that of MANSC domain-containing protein 1 (MANSC1) from Homo sapiens (Human).